The chain runs to 698 residues: Polyphosphate kinase 1 (698 aa).

Residue Asn-46 coordinates ATP. Residues Arg-377 and Arg-407 each coordinate Mg(2+). The active-site Phosphohistidine intermediate is the His-437. Residues Tyr-470, Arg-566, and His-594 each contribute to the ATP site.

It belongs to the polyphosphate kinase 1 (PPK1) family. It depends on Mg(2+) as a cofactor. An intermediate of this reaction is the autophosphorylated ppk in which a phosphate is covalently linked to a histidine residue through a N-P bond.

The catalysed reaction is [phosphate](n) + ATP = [phosphate](n+1) + ADP. Functionally, catalyzes the reversible transfer of the terminal phosphate of ATP to form a long-chain polyphosphate (polyP). The sequence is that of Polyphosphate kinase 1 from Chlorobaculum tepidum (strain ATCC 49652 / DSM 12025 / NBRC 103806 / TLS) (Chlorobium tepidum).